The chain runs to 602 residues: Elongation factor 4 (602 aa).

The tr-type G domain occupies 8–190 (DLIRNFSIVA…AIVHRLPPPK (183 aa)). Residues 20-25 (DHGKST) and 137-140 (NKID) each bind GTP.

Belongs to the TRAFAC class translation factor GTPase superfamily. Classic translation factor GTPase family. LepA subfamily.

Its subcellular location is the cell inner membrane. The catalysed reaction is GTP + H2O = GDP + phosphate + H(+). Functionally, required for accurate and efficient protein synthesis under certain stress conditions. May act as a fidelity factor of the translation reaction, by catalyzing a one-codon backward translocation of tRNAs on improperly translocated ribosomes. Back-translocation proceeds from a post-translocation (POST) complex to a pre-translocation (PRE) complex, thus giving elongation factor G a second chance to translocate the tRNAs correctly. Binds to ribosomes in a GTP-dependent manner. The polypeptide is Elongation factor 4 (Cereibacter sphaeroides (strain KD131 / KCTC 12085) (Rhodobacter sphaeroides)).